The primary structure comprises 265 residues: Isoprenyl transferase (265 aa).

Aspartate 35 is a catalytic residue. Residue aspartate 35 coordinates Mg(2+). Substrate-binding positions include 36-39 (GNGR), tryptophan 40, arginine 48, histidine 52, and 80-82 (SIE). Asparagine 83 functions as the Proton acceptor in the catalytic mechanism. Residues tryptophan 84, arginine 86, arginine 203, and 209–211 (RIS) contribute to the substrate site. Mg(2+) is bound at residue glutamate 222.

The protein belongs to the UPP synthase family. Homodimer. Mg(2+) is required as a cofactor.

Its function is as follows. Catalyzes the condensation of isopentenyl diphosphate (IPP) with allylic pyrophosphates generating different type of terpenoids. This chain is Isoprenyl transferase, found in Chlorobaculum tepidum (strain ATCC 49652 / DSM 12025 / NBRC 103806 / TLS) (Chlorobium tepidum).